A 76-amino-acid polypeptide reads, in one-letter code: Zinc finger protein 706 (76 aa).

Positions 1 to 13 (MARGQQKIQSQQK) are enriched in low complexity. Disordered stretches follow at residues 1 to 32 (MARGQQKIQSQQKNAKKQAGQKKKQGHDQKAA) and 53 to 76 (TFKQHFESKHPKTPLPPELADVQA). The segment covering 14-25 (NAKKQAGQKKKQ) has biased composition (basic residues). Residues 39 to 62 (YTCTVCRTQMPDPKTFKQHFESKH) form a C2H2-type zinc finger. Basic and acidic residues predominate over residues 53–62 (TFKQHFESKH).

The protein resides in the cytoplasm. It localises to the nucleus. Its function is as follows. Transcription repressor involved in the exit of embryonic stem cells (ESCs) from self-renewal. Acts by repressing expression of KLF4. The chain is Zinc finger protein 706 from Homo sapiens (Human).